Reading from the N-terminus, the 201-residue chain is Dephospho-CoA kinase (201 aa).

A DPCK domain is found at 3 to 201 (IIGLTGGMAA…ALLHRLREAS (199 aa)). 11–16 (AAGKST) is an ATP binding site.

The protein belongs to the CoaE family.

Its subcellular location is the cytoplasm. The catalysed reaction is 3'-dephospho-CoA + ATP = ADP + CoA + H(+). Its pathway is cofactor biosynthesis; coenzyme A biosynthesis; CoA from (R)-pantothenate: step 5/5. Its function is as follows. Catalyzes the phosphorylation of the 3'-hydroxyl group of dephosphocoenzyme A to form coenzyme A. The chain is Dephospho-CoA kinase from Gluconobacter oxydans (strain 621H) (Gluconobacter suboxydans).